The sequence spans 113 residues: Large ribosomal subunit protein uL22 (113 aa).

It belongs to the universal ribosomal protein uL22 family. Part of the 50S ribosomal subunit.

In terms of biological role, this protein binds specifically to 23S rRNA; its binding is stimulated by other ribosomal proteins, e.g. L4, L17, and L20. It is important during the early stages of 50S assembly. It makes multiple contacts with different domains of the 23S rRNA in the assembled 50S subunit and ribosome. Its function is as follows. The globular domain of the protein is located near the polypeptide exit tunnel on the outside of the subunit, while an extended beta-hairpin is found that lines the wall of the exit tunnel in the center of the 70S ribosome. In Opitutus terrae (strain DSM 11246 / JCM 15787 / PB90-1), this protein is Large ribosomal subunit protein uL22.